Here is a 54-residue protein sequence, read N- to C-terminus: Ovomucoid (54 aa).

The region spanning valine 4–cysteine 54 is the Kazal-like domain. 3 cysteine pairs are disulfide-bonded: cysteine 6-cysteine 36, cysteine 14-cysteine 33, and cysteine 22-cysteine 54. The N-linked (GlcNAc...) asparagine glycan is linked to asparagine 43.

It localises to the secreted. The polypeptide is Ovomucoid (Opisthocomus hoazin (Hoatzin)).